A 364-amino-acid polypeptide reads, in one-letter code: Probable dual-specificity RNA methyltransferase RlmN (364 aa).

Catalysis depends on E107, which acts as the Proton acceptor. The Radical SAM core domain maps to 113–346 (HDYGNSVCVT…ATIRREQGSD (234 aa)). Residues C120 and C351 are joined by a disulfide bond. C127, C131, and C134 together coordinate [4Fe-4S] cluster. S-adenosyl-L-methionine-binding positions include 177–178 (GE), S209, 232–234 (SLH), and N308. Catalysis depends on C351, which acts as the S-methylcysteine intermediate.

It belongs to the radical SAM superfamily. RlmN family. It depends on [4Fe-4S] cluster as a cofactor.

Its subcellular location is the cytoplasm. It carries out the reaction adenosine(2503) in 23S rRNA + 2 reduced [2Fe-2S]-[ferredoxin] + 2 S-adenosyl-L-methionine = 2-methyladenosine(2503) in 23S rRNA + 5'-deoxyadenosine + L-methionine + 2 oxidized [2Fe-2S]-[ferredoxin] + S-adenosyl-L-homocysteine. The catalysed reaction is adenosine(37) in tRNA + 2 reduced [2Fe-2S]-[ferredoxin] + 2 S-adenosyl-L-methionine = 2-methyladenosine(37) in tRNA + 5'-deoxyadenosine + L-methionine + 2 oxidized [2Fe-2S]-[ferredoxin] + S-adenosyl-L-homocysteine. Its function is as follows. Specifically methylates position 2 of adenine 2503 in 23S rRNA and position 2 of adenine 37 in tRNAs. Confers resistance to some classes of antibiotics. This is Probable dual-specificity RNA methyltransferase RlmN from Staphylococcus aureus (strain Mu3 / ATCC 700698).